Consider the following 162-residue polypeptide: Transcription elongation factor GreB (162 aa).

Positions 52–76 (GKRRLREIDRRIRFLSKRLEALQII) form a coiled coil.

It belongs to the GreA/GreB family. GreB subfamily.

Its function is as follows. Necessary for efficient RNA polymerase transcription elongation past template-encoded arresting sites. The arresting sites in DNA have the property of trapping a certain fraction of elongating RNA polymerases that pass through, resulting in locked ternary complexes. Cleavage of the nascent transcript by cleavage factors such as GreA or GreB allows the resumption of elongation from the new 3'terminus. GreB releases sequences of up to 9 nucleotides in length. This Haemophilus ducreyi (strain 35000HP / ATCC 700724) protein is Transcription elongation factor GreB.